Reading from the N-terminus, the 89-residue chain is Barrier-to-autointegration factor (89 aa).

Methionine 1 carries the N-acetylmethionine modification. Threonine 2 carries the post-translational modification N-acetylthreonine; in Barrier-to-autointegration factor, N-terminally processed. Phosphothreonine; by VRK1 and VRK2 is present on residues threonine 2 and threonine 3. Serine 4 is modified (phosphoserine; by VRK1 and VRK2). The region spanning 20 to 35 (VGSLAGIGEVLGKKLE) is the HhH domain.

The protein belongs to the BAF family. In terms of assembly, homodimer. Heterodimerizes with BANF2. Interacts with ANKLE2/LEM4, leading to decreased phosphorylation by VRK1 and promoting dephosphorylation by protein phosphatase 2A (PP2A). Binds non-specifically to double-stranded DNA, and is found as a hexamer or dodecamer upon DNA binding. Binds to LEM domain-containing nuclear proteins such as LEMD3/MAN1, TMPO/LAP2 and EMD (emerin). Interacts with ANKLE1 (via LEM domain); the interaction may favor BANF1 dimerization. Interacts with CRX and LMNA (lamin-A). Binds linker histone H1.1 and core histones H3. Interacts with LEMD2 (via LEM domain). Interacts with PARP1; interaction takes place in response to oxidative DNA damage. In terms of processing, ser-4 is the major site of phosphorylation as compared to Thr-2 and Thr-3. Phosphorylation on Thr-2; Thr-3 and Ser-4 disrupts its ability to bind DNA and reduces its ability to bind LEM domain-containing proteins. Non phosphorylated BAF seems to enhance binding between EMD and LMNA. Dephosphorylated by protein phosphatase 2A (PP2A) following interaction with ANKLE2/LEM4 during mitotic exit, leading to mitotic nuclear envelope reassembly.

The protein resides in the nucleus. The protein localises to the chromosome. Its subcellular location is the nucleus envelope. It is found in the cytoplasm. Functionally, non-specific DNA-binding protein that plays key roles in mitotic nuclear reassembly, chromatin organization, DNA damage response, gene expression and intrinsic immunity against foreign DNA. Contains two non-specific double-stranded DNA (dsDNA)-binding sites which promote DNA cross-bridging. Plays a key role in nuclear membrane reformation at the end of mitosis by driving formation of a single nucleus in a spindle-independent manner. Transiently cross-bridges anaphase chromosomes via its ability to bridge distant DNA sites, leading to the formation of a dense chromatin network at the chromosome ensemble surface that limits membranes to the surface. Also acts as a negative regulator of innate immune activation by restricting CGAS activity toward self-DNA upon acute loss of nuclear membrane integrity. Outcompetes CGAS for DNA-binding, thereby preventing CGAS activation and subsequent damaging autoinflammatory responses. Also involved in DNA damage response: interacts with PARP1 in response to oxidative stress, thereby inhibiting the ADP-ribosyltransferase activity of PARP1. Involved in the recognition of exogenous dsDNA in the cytosol: associates with exogenous dsDNA immediately after its appearance in the cytosol at endosome breakdown and is required to avoid autophagy. In case of poxvirus infection, has an antiviral activity by blocking viral DNA replication. This chain is Barrier-to-autointegration factor (BANF1), found in Bos taurus (Bovine).